The sequence spans 174 residues: ATP-dependent protease subunit HslV (174 aa).

The active site involves Thr-2. Na(+)-binding residues include Ala-156, Cys-159, and Thr-162.

The protein belongs to the peptidase T1B family. HslV subfamily. In terms of assembly, a double ring-shaped homohexamer of HslV is capped on each side by a ring-shaped HslU homohexamer. The assembly of the HslU/HslV complex is dependent on binding of ATP.

The protein localises to the cytoplasm. The enzyme catalyses ATP-dependent cleavage of peptide bonds with broad specificity.. With respect to regulation, allosterically activated by HslU binding. In terms of biological role, protease subunit of a proteasome-like degradation complex believed to be a general protein degrading machinery. The protein is ATP-dependent protease subunit HslV of Agrobacterium fabrum (strain C58 / ATCC 33970) (Agrobacterium tumefaciens (strain C58)).